A 157-amino-acid chain; its full sequence is Hydra actinoporin-like toxin 3 (157 aa).

The first 14 residues, 1-14 (LEATVSRNKKYKFT), serve as a signal peptide directing secretion. The Cell attachment site signature appears at 129-131 (IAG).

It belongs to the actinoporin family. HALT subfamily. In terms of assembly, octamer or nonamer in membranes. Monomer in the soluble state. In vitro, interacts with folate receptor alpha (of target organism).

The protein localises to the nematocyst. It localises to the secreted. It is found in the target cell membrane. Functionally, pore-forming protein that forms hydrophilic pores and causes cytolysis. Compared to equinatoxin-2 (AC P61914), it reveals lower cytolysis activity (5-12-fold difference, tested on erythrocytes), a larger pore size (probably 2-3 nm) and different affinity to membrane lipids (100-fold lower affinity to sphingomyelin). Binds to the two sphingolipids, lysophosphatidic acid (LPA) and sphingosine-1-phosphate (S1P). Does not bind (or only weakly) to sulfatides (SFT). Shows cytolytic activity on HeLa cells, with a different potency than its paralogs (from most potent to less potent: HALT-4&gt;HALT-6~HALT-1&gt;HALT-3&gt;HALT-7&gt;HALT-2). Pore formation is a multi-step process that involves specific recognition of membrane lipid by a protein aromatic residues rich region, firm binding to the membrane (mainly driven by hydrophobic interactions) accompanied by the transfer of the N-terminal region to the lipid-water interface and finally pore formation after oligomerization of monomers. In vitro, binds to the folate receptor alpha (FOLR1), a GPI-anchored membrane protein that plays a major role in the uptake of folate/folic acid into cells via endocytosis, suggesting a possible involvement of this receptor in the mechanism of HALT-1-induced cell lysis. In vivo, does not cause visible paralysis in larvae of the blowfly Sarcophaga faculata, the most common arthropod prey of Hydra. In Hydra vulgaris (Hydra), this protein is Hydra actinoporin-like toxin 3.